The chain runs to 461 residues: Photosystem II CP43 reaction center protein (461 aa).

A propeptide spanning residues 1 to 2 is cleaved from the precursor; it reads ME. T3 carries the post-translational modification N-acetylthreonine. A Phosphothreonine modification is found at T3. A run of 5 helical transmembrane segments spans residues 57-81, 122-143, 166-188, 243-263, and 279-300; these read LFEV…PHLA, LLGP…KDRN, KALY…RKIT, KPFA…LSYS, and WFNN…ASQA. E355 serves as a coordination point for [CaMn4O5] cluster. The chain crosses the membrane as a helical span at residues 435–459; the sequence is RARAAAAGFEKGIDRDFEPVLSMTP.

It belongs to the PsbB/PsbC family. PsbC subfamily. In terms of assembly, PSII is composed of 1 copy each of membrane proteins PsbA, PsbB, PsbC, PsbD, PsbE, PsbF, PsbH, PsbI, PsbJ, PsbK, PsbL, PsbM, PsbT, PsbX, PsbY, PsbZ, Psb30/Ycf12, at least 3 peripheral proteins of the oxygen-evolving complex and a large number of cofactors. It forms dimeric complexes. The cofactor is Binds multiple chlorophylls and provides some of the ligands for the Ca-4Mn-5O cluster of the oxygen-evolving complex. It may also provide a ligand for a Cl- that is required for oxygen evolution. PSII binds additional chlorophylls, carotenoids and specific lipids..

It localises to the plastid. Its subcellular location is the chloroplast thylakoid membrane. Its function is as follows. One of the components of the core complex of photosystem II (PSII). It binds chlorophyll and helps catalyze the primary light-induced photochemical processes of PSII. PSII is a light-driven water:plastoquinone oxidoreductase, using light energy to abstract electrons from H(2)O, generating O(2) and a proton gradient subsequently used for ATP formation. In Platanus occidentalis (Sycamore), this protein is Photosystem II CP43 reaction center protein.